A 644-amino-acid polypeptide reads, in one-letter code: Exoribonuclease 2 (644 aa).

In terms of domain architecture, RNB spans 190 to 516 (REDLTALDFI…INHRLLKALI (327 aa)). Positions 562–644 (DSRFAAEIID…ENRSVIARPV (83 aa)) constitute an S1 motif domain.

This sequence belongs to the RNR ribonuclease family. RNase II subfamily.

It is found in the cytoplasm. It catalyses the reaction Exonucleolytic cleavage in the 3'- to 5'-direction to yield nucleoside 5'-phosphates.. Functionally, involved in mRNA degradation. Hydrolyzes single-stranded polyribonucleotides processively in the 3' to 5' direction. In Sodalis glossinidius (strain morsitans), this protein is Exoribonuclease 2.